The primary structure comprises 989 residues: Protease PrtH (989 aa).

2 consecutive repeats follow at residues 270–323 (TPTD…KCVN) and 528–581 (SPAS…VCVD). A disordered region spans residues 969–989 (PRDTPWRYGKRELPPSASGMR).

It belongs to the peptidase C25 family.

It is found in the cytoplasmic vesicle. Its function is as follows. Cleaves human complement component C3. May enable P.gingivalis to evade complement-mediated killing during the immune response. Plays an important role in soft tissue infections and is a virulence factor. This Porphyromonas gingivalis (strain ATCC BAA-308 / W83) protein is Protease PrtH (prtH).